We begin with the raw amino-acid sequence, 188 residues long: Tuftelin (188 aa).

Residues 1–181 (SLRKTVQDLL…DRMEHLIEKQ (181 aa)) adopt a coiled-coil conformation.

Belongs to the tuftelin family. Interacts with TFIP11.

The protein resides in the secreted. Involved in the structural organization of the epidermis. Involved in the mineralization and structural organization of enamel. This chain is Tuftelin (TUFT1), found in Sus scrofa (Pig).